A 630-amino-acid polypeptide reads, in one-letter code: Glutathione hydrolase proenzyme 1 (630 aa).

Residues 1 to 49 lie on the Cytoplasmic side of the membrane; that stretch reads MGINTSSAQSSGAASIARSSVNVKSGNRHLSSNKKSATSALEERASRPS. A helical; Signal-anchor for type II membrane protein membrane pass occupies residues 50–70; that stretch reads ILVTFLVLAGTILSLYIWPIL. Residues 71–630 lie on the Lumenal side of the membrane; that stretch reads SPDLFFANQR…SRKQAVAAAY (560 aa). Asn156 carries N-linked (GlcNAc...) asparagine glycosylation. Position 165 (Arg165) interacts with L-glutamate. N-linked (GlcNAc...) asparagine glycans are attached at residues Asn180, Asn315, Asn397, and Asn417. Thr441 (nucleophile) is an active-site residue. L-glutamate-binding positions include Ser459, Asn461, Asp483, 511 to 512, and 532 to 533; these read SS and GG. A glycan (N-linked (GlcNAc...) asparagine) is linked at Asn612.

The protein belongs to the gamma-glutamyltransferase family. Heterodimer composed of the light and heavy chains. The active site is located in the light chain. Post-translationally, cleaved by autocatalysis into a large and a small subunit.

It localises to the endoplasmic reticulum membrane. It catalyses the reaction an N-terminal (5-L-glutamyl)-[peptide] + an alpha-amino acid = 5-L-glutamyl amino acid + an N-terminal L-alpha-aminoacyl-[peptide]. The enzyme catalyses glutathione + H2O = L-cysteinylglycine + L-glutamate. It carries out the reaction an S-substituted glutathione + H2O = an S-substituted L-cysteinylglycine + L-glutamate. It functions in the pathway sulfur metabolism; glutathione metabolism. In terms of biological role, catalyzes the transfer of the gamma-glutamyl moiety of glutathione (GSH) and other gamma-glutamyl compounds to amino acids and peptides. Major GSH-degrading enzyme, catalyzing the hydrolytic release of L-glutamate from GSH. The chain is Glutathione hydrolase proenzyme 1 (ggt1) from Schizosaccharomyces pombe (strain 972 / ATCC 24843) (Fission yeast).